The sequence spans 639 residues: tRNA uridine 5-carboxymethylaminomethyl modification enzyme MnmG (639 aa).

FAD-binding positions include 13-18 (GGGHAG), V125, and S180. 273–287 (GPRYCPSIEDKVVRF) lines the NAD(+) pocket. Residue Q370 coordinates FAD. Residues 620–639 (KRQGGNGPQSPRPDDGRARA) are disordered.

This sequence belongs to the MnmG family. As to quaternary structure, homodimer. Heterotetramer of two MnmE and two MnmG subunits. The cofactor is FAD.

The protein resides in the cytoplasm. In terms of biological role, NAD-binding protein involved in the addition of a carboxymethylaminomethyl (cmnm) group at the wobble position (U34) of certain tRNAs, forming tRNA-cmnm(5)s(2)U34. The sequence is that of tRNA uridine 5-carboxymethylaminomethyl modification enzyme MnmG from Thioalkalivibrio sulfidiphilus (strain HL-EbGR7).